Consider the following 471-residue polypeptide: 3-isopropylmalate dehydratase large subunit (471 aa).

Residues C347, C407, and C410 each contribute to the [4Fe-4S] cluster site.

This sequence belongs to the aconitase/IPM isomerase family. LeuC type 1 subfamily. Heterodimer of LeuC and LeuD. The cofactor is [4Fe-4S] cluster.

It carries out the reaction (2R,3S)-3-isopropylmalate = (2S)-2-isopropylmalate. It participates in amino-acid biosynthesis; L-leucine biosynthesis; L-leucine from 3-methyl-2-oxobutanoate: step 2/4. In terms of biological role, catalyzes the isomerization between 2-isopropylmalate and 3-isopropylmalate, via the formation of 2-isopropylmaleate. This is 3-isopropylmalate dehydratase large subunit from Edwardsiella ictaluri (strain 93-146).